Here is a 295-residue protein sequence, read N- to C-terminus: Non-selective voltage-gated ion channel VDAC2 (295 aa).

2 residues coordinate ATP: Lys24 and Lys32. Residue Lys32 is modified to N6-acetyllysine; alternate. Lys32 is modified (N6-succinyllysine; alternate). Lys32 participates in a covalent cross-link: Glycyl lysine isopeptide (Lys-Gly) (interchain with G-Cter in ubiquitin); alternate. The next 2 membrane-spanning stretches (beta stranded) occupy residues 38 to 47 (LVKLDVKTKS) and 51 to 59 (VEFSTSGSS). Lys65 participates in a covalent cross-link: Glycyl lysine isopeptide (Lys-Gly) (interchain with G-Cter in ubiquitin). The beta stranded transmembrane segment at 66 to 76 (VSGTLETKYKW) threads the bilayer. Tyr79 is subject to Phosphotyrosine. The next 3 beta stranded transmembrane spans lie at 81–88 (LTFTEKWN), 92–101 (TLGTEIAIED), and 107–116 (LKLTFDTTFS). Phosphothreonine is present on Thr119. The residue at position 121 (Lys121) is an N6-acetyllysine; alternate. Lys121 participates in a covalent cross-link: Glycyl lysine isopeptide (Lys-Gly) (interchain with G-Cter in ubiquitin); alternate. Lys122 is covalently cross-linked (Glycyl lysine isopeptide (Lys-Gly) (interchain with G-Cter in ubiquitin)). The next 4 beta stranded transmembrane spans lie at 123-132 (SGKIKSAYKR), 135-142 (INLGCDVD), 149-157 (AIHGSAVFG), and 162-170 (LAGYQMTFD). Lys173 is covalently cross-linked (Glycyl lysine isopeptide (Lys-Gly) (interchain with G-Cter in ubiquitin)). Transmembrane regions (beta stranded) follow at residues 175–187 (KLTR…GYRT), 190–197 (FQLHTNVN), 201–210 (EFGGSIYQKV), 214–223 (FDTSVNLAWT), 230–239 (RFGIAAKYQL), and 243–250 (ASISAKVN). A Phosphotyrosine modification is found at Tyr237. Phosphoserine is present on Ser252. NAD(+) is bound by residues 254–256 (LIG) and 272–276 (SALVD). Transmembrane regions (beta stranded) follow at residues 254-263 (LIGVGYTQTL) and 266-275 (GVKLTLSALV). Position 278 is an N6-acetyllysine; alternate (Lys278). Lys278 participates in a covalent cross-link: Glycyl lysine isopeptide (Lys-Gly) (interchain with G-Cter in ubiquitin); alternate. A beta stranded transmembrane segment spans residues 285–294 (HKLGLALELE).

This sequence belongs to the eukaryotic mitochondrial porin family. In terms of assembly, monomer, homodimer and higher order oligomers; formation of higher order structures is necessary for scramblase activity. Interacts with ARMC12 in a TBC1D21-dependent manner. Interacts with KLC3. Interacts with SPATA33. Interacts with PPP3CC in a SPATA33-dependent manner. Post-translationally, ubiquitinated by PRKN during mitophagy, leading to its degradation and enhancement of mitophagy. Deubiquitinated by USP30. Highly expressed in heart, kidney, brain and ascitic tumor with very low levels in liver. Expressed in the head region of epididymal sperm.

Its subcellular location is the mitochondrion outer membrane. The protein localises to the membrane. The enzyme catalyses chloride(in) = chloride(out). It carries out the reaction K(+)(in) = K(+)(out). The catalysed reaction is a 1,2-diacyl-sn-glycero-3-phospho-L-serine(in) = a 1,2-diacyl-sn-glycero-3-phospho-L-serine(out). It catalyses the reaction a 1,2-diacyl-sn-glycero-3-phosphocholine(in) = a 1,2-diacyl-sn-glycero-3-phosphocholine(out). The enzyme catalyses a 1,2-diacyl-sn-glycero-3-phospho-(1D-myo-inositol)(in) = a 1,2-diacyl-sn-glycero-3-phospho-(1D-myo-inositol)(out). In terms of biological role, non-selective voltage-gated ion channel that mediates the transport of anions and cations through the mitochondrion outer membrane and plasma membrane. The channel adopts an open conformation at zero mV and a closed conformation at both positive and negative potentials. There are two populations of channels; the main that functions in a lower open-state conductance with lower ion selectivity, that switch, in a voltage-dependent manner, from the open to a low-conducting 'closed' state and the other that has a normal ion selectivity in the typical high conductance, 'open' state. Binds various lipids, including the sphingolipid ceramide, the phospholipid phosphatidylcholine, and the sterols cholesterol and oxysterol. Binding of ceramide promotes the mitochondrial outer membrane permeabilization (MOMP) apoptotic pathway. Functionally, catalyzes the scrambling of phospholipids across the outer mitochondrial membrane; the mechanism is unrelated to channel activity and is capable of translocating both anionic and zwitterionic phospholipids. The protein is Non-selective voltage-gated ion channel VDAC2 of Rattus norvegicus (Rat).